The chain runs to 101 residues: Protein RALF-like 14 (101 aa).

Residues 1–21 (MKLLIFAVIISVVLFPVLVSS) form the signal peptide. The propeptide at 22–56 (RTIKCDQLSGKCINGEEKEIMNMRLGLDVSSRRIL) is removed in mature form. A disulfide bridge links cysteine 90 with cysteine 96.

It belongs to the plant rapid alkalinization factor (RALF) family. In terms of processing, proteolytically cleaved, probably by S1P, a subtilisin-like serine protease (subtilase).

Its subcellular location is the secreted. Functionally, cell signaling peptide that may regulate plant stress, growth, and development. Mediates a rapid alkalinization of extracellular space by mediating a transient increase in the cytoplasmic Ca(2+) concentration leading to a calcium-dependent signaling events through a cell surface receptor and a concomitant activation of some intracellular mitogen-activated protein kinases. This Arabidopsis thaliana (Mouse-ear cress) protein is Protein RALF-like 14 (RALFL14).